A 603-amino-acid chain; its full sequence is Elongation factor 4 (603 aa).

The tr-type G domain occupies 7–189 (SRIRNFSIIA…SIVHLVPPPQ (183 aa)). GTP is bound by residues 19–24 (DHGKST) and 136–139 (NKID).

The protein belongs to the TRAFAC class translation factor GTPase superfamily. Classic translation factor GTPase family. LepA subfamily.

Its subcellular location is the cell inner membrane. The catalysed reaction is GTP + H2O = GDP + phosphate + H(+). Functionally, required for accurate and efficient protein synthesis under certain stress conditions. May act as a fidelity factor of the translation reaction, by catalyzing a one-codon backward translocation of tRNAs on improperly translocated ribosomes. Back-translocation proceeds from a post-translocation (POST) complex to a pre-translocation (PRE) complex, thus giving elongation factor G a second chance to translocate the tRNAs correctly. Binds to ribosomes in a GTP-dependent manner. The polypeptide is Elongation factor 4 (Cyanothece sp. (strain PCC 7425 / ATCC 29141)).